The sequence spans 225 residues: UPF0758 protein BCE_4545 (225 aa).

In terms of domain architecture, MPN spans 103-225 (SIRSPEDCAT…FVSLKEKGHI (123 aa)). The Zn(2+) site is built by H174, H176, and D187. The short motif at 174 to 187 (HNHPSGDPAPSRED) is the JAMM motif element.

The protein belongs to the UPF0758 family.

This Bacillus cereus (strain ATCC 10987 / NRS 248) protein is UPF0758 protein BCE_4545.